The primary structure comprises 321 residues: Fe-S cluster assembly protein DRE2 (321 aa).

The tract at residues 1–161 is N-terminal SAM-like domain; the sequence is MPAPVPPTAF…STPVTLSGAR (161 aa). The segment at 123 to 168 is disordered; that stretch reads PSPSTLAYTSPSAPSLPTVASDPSPAPSSSTPVTLSGARPLQLRRN. The span at 139–156 shows a compositional bias: low complexity; it reads PTVASDPSPAPSSSTPVT. The interval 162-197 is linker; the sequence is PLQLRRNGDKARKAALWAIDSPLIPDGGKSLLTPAD. [2Fe-2S] cluster-binding residues include Cys203, Cys219, Cys222, and Cys224. The fe-S binding site A stretch occupies residues 203 to 224; that stretch reads CVFPAENGKPVKRRRACKDCTC. Cys285, Cys288, Cys296, and Cys299 together coordinate [4Fe-4S] cluster. 2 consecutive short sequence motifs (cx2C motif) follow at residues 285–288 and 296–299; these read CGSC and CSSC. The fe-S binding site B stretch occupies residues 285-299; it reads CGSCYLGDAFRCSSC.

This sequence belongs to the anamorsin family. Monomer. Interacts with TAH18. Interacts with MIA40. [2Fe-2S] cluster is required as a cofactor. Requires [4Fe-4S] cluster as cofactor.

The protein localises to the cytoplasm. The protein resides in the mitochondrion intermembrane space. Its function is as follows. Component of the cytosolic iron-sulfur (Fe-S) protein assembly (CIA) machinery required for the maturation of extramitochondrial Fe-S proteins. Part of an electron transfer chain functioning in an early step of cytosolic Fe-S biogenesis, facilitating the de novo assembly of a [4Fe-4S] cluster on the scaffold complex CFD1-NBP35. Electrons are transferred to DRE2 from NADPH via the FAD- and FMN-containing protein TAH18. TAH18-DRE2 are also required for the assembly of the diferric tyrosyl radical cofactor of ribonucleotide reductase (RNR), probably by providing electrons for reduction during radical cofactor maturation in the catalytic small subunit RNR2. This Cryptococcus neoformans var. neoformans serotype D (strain B-3501A) (Filobasidiella neoformans) protein is Fe-S cluster assembly protein DRE2.